We begin with the raw amino-acid sequence, 1216 residues long: ATP-dependent helicase/nuclease subunit A (1216 aa).

Positions 26 to 488 (QKKTAEQIEA…ILLKENFRSS (463 aa)) constitute a UvrD-like helicase ATP-binding domain. Residue 47–54 (ASAGSGKT) participates in ATP binding. A UvrD-like helicase C-terminal domain is found at 515–802 (KHQLVFANTK…ELMTIHKSKG (288 aa)).

This sequence belongs to the helicase family. AddA subfamily. As to quaternary structure, heterodimer of AddA and AddB/RexB. Mg(2+) serves as cofactor.

It catalyses the reaction Couples ATP hydrolysis with the unwinding of duplex DNA by translocating in the 3'-5' direction.. The enzyme catalyses ATP + H2O = ADP + phosphate + H(+). In terms of biological role, the heterodimer acts as both an ATP-dependent DNA helicase and an ATP-dependent, dual-direction single-stranded exonuclease. Recognizes the chi site generating a DNA molecule suitable for the initiation of homologous recombination. The AddA nuclease domain is required for chi fragment generation; this subunit has the helicase and 3' -&gt; 5' nuclease activities. This chain is ATP-dependent helicase/nuclease subunit A, found in Streptococcus pneumoniae (strain Hungary19A-6).